Reading from the N-terminus, the 517-residue chain is zeta-carotene-forming phytoene desaturase (517 aa).

11–44 contacts FAD; the sequence is VVVGAGVGGLAAAARLAHQGFDVQVFEKTQGPGG.

It belongs to the carotenoid/retinoid oxidoreductase family. FAD is required as a cofactor.

It carries out the reaction 15-cis-phytoene + 2 A = all-trans-zeta-carotene + 2 AH2. Its pathway is carotenoid biosynthesis; lycopene biosynthesis. In terms of biological role, dehydrogenates carotenes in the cis conformation: has cis-to-trans isomerase activity and mediates dehydrogenation of cis-phytoene, producing zeta-carotene via the intermediary of phytofluene by the symmetrical introduction of 2 double bonds at the C-11 and C-11' positions of phytoene. This chain is zeta-carotene-forming phytoene desaturase (carA2), found in Myxococcus xanthus.